The primary structure comprises 313 residues: Protein FixB (313 aa).

255–283 (LYLAVGISGQIQHMVGANGAQTIFAINKD) contacts FAD.

It belongs to the ETF alpha-subunit/FixB family. In terms of assembly, heterodimer of FixA and FixB.

The protein operates within amine and polyamine metabolism; carnitine metabolism. In terms of biological role, required for anaerobic carnitine reduction. May bring reductant to CaiA. In Salmonella agona (strain SL483), this protein is Protein FixB.